Here is a 251-residue protein sequence, read N- to C-terminus: Ribonuclease HII (251 aa).

An RNase H type-2 domain is found at 32-223 (GPVAGVDEAG…VRERLGLRPL (192 aa)). A divalent metal cation-binding residues include Asp-38, Glu-39, and Asp-132.

It belongs to the RNase HII family. The cofactor is Mn(2+). Requires Mg(2+) as cofactor.

The protein localises to the cytoplasm. The catalysed reaction is Endonucleolytic cleavage to 5'-phosphomonoester.. Endonuclease that specifically degrades the RNA of RNA-DNA hybrids. The sequence is that of Ribonuclease HII from Nocardia farcinica (strain IFM 10152).